A 142-amino-acid polypeptide reads, in one-letter code: Protein spalt-accessory (142 aa).

The first 16 residues, 1–16, serve as a signal peptide directing secretion; sequence MKLLIALFALVTAVNA. A disordered region spans residues 75 to 142; that stretch reads GFAGQGSPNQ…HHEHHGHHRH (68 aa). Positions 107–124 are enriched in basic and acidic residues; sequence GHFHENPHEYPEHHGDHH. Positions 125-142 are enriched in basic residues; that stretch reads REHHEHHGHHEHHGHHRH.

It localises to the secreted. Likely to be involved in the establishment of the head. In Drosophila melanogaster (Fruit fly), this protein is Protein spalt-accessory (sala).